A 203-amino-acid polypeptide reads, in one-letter code: Small ribosomal subunit protein uS4 (203 aa).

Residues 93–154 (RRLDNVVYRC…KSRNLDAVAD (62 aa)) form the S4 RNA-binding domain.

It belongs to the universal ribosomal protein uS4 family. Part of the 30S ribosomal subunit. Contacts protein S5. The interaction surface between S4 and S5 is involved in control of translational fidelity.

One of the primary rRNA binding proteins, it binds directly to 16S rRNA where it nucleates assembly of the body of the 30S subunit. In terms of biological role, with S5 and S12 plays an important role in translational accuracy. The protein is Small ribosomal subunit protein uS4 of Chlorobaculum tepidum (strain ATCC 49652 / DSM 12025 / NBRC 103806 / TLS) (Chlorobium tepidum).